We begin with the raw amino-acid sequence, 306 residues long: Large ribosomal subunit protein uL2m (306 aa).

Residues 1–60 (MALRVVTRALGSLSLTPRIAAVPGPSLLPAAQVTNNVLLQLPSASMLLPSRPLLTSVALS) constitute a mitochondrion transit peptide.

This sequence belongs to the universal ribosomal protein uL2 family. As to quaternary structure, component of the mitochondrial ribosome large subunit (39S) which comprises a 16S rRNA and about 50 distinct proteins.

It is found in the mitochondrion. In Bos taurus (Bovine), this protein is Large ribosomal subunit protein uL2m (MRPL2).